Here is a 240-residue protein sequence, read N- to C-terminus: Uridylate kinase (240 aa).

12 to 15 (KLSG) provides a ligand contact to ATP. The interval 20–25 (GDQGKG) is involved in allosteric activation by GTP. Glycine 54 provides a ligand contact to UMP. Glycine 55 and arginine 59 together coordinate ATP. UMP is bound by residues aspartate 74 and 135-142 (TGSPYFST). ATP is bound by residues asparagine 163, tyrosine 169, and aspartate 172.

It belongs to the UMP kinase family. As to quaternary structure, homohexamer.

The protein localises to the cytoplasm. It catalyses the reaction UMP + ATP = UDP + ADP. It functions in the pathway pyrimidine metabolism; CTP biosynthesis via de novo pathway; UDP from UMP (UMPK route): step 1/1. With respect to regulation, allosterically activated by GTP. Inhibited by UTP. Catalyzes the reversible phosphorylation of UMP to UDP. This Ligilactobacillus salivarius (strain UCC118) (Lactobacillus salivarius) protein is Uridylate kinase.